A 291-amino-acid chain; its full sequence is MLVATLLCALCCGLLAASAHAGYSEDRCSWRGSGLTQEPGSVGQLTLDCTEGAIEWLYPAGALRLTLGGPDPGTRPSIVCLRPERPFAGAQVFAERMTGNLELLLAEGPDLAGGRCMRWGPRERRALFLQATPHRDISRRVAAFRFELHEDQRAEMSPQAQGLGVDGACRPCSDAELLLAACTSDFVIHGTIHGVAHDTELQESVITVVVARVIRQTLPLFKEGSSEGQGRASIRTLLRCGVRPGPGSFLFMGWSRFGEAWLGCAPRFQEFSRVYSAALTTHLNPCEMALD.

The signal sequence occupies residues methionine 1–alanine 21. 5 disulfides stabilise this stretch: cysteine 28/cysteine 49, cysteine 80/cysteine 116, cysteine 169/cysteine 240, cysteine 172/cysteine 264, and cysteine 182/cysteine 286.

This sequence belongs to the meteorin family. In terms of assembly, monomer. As to expression, highly expressed in brain. Expressed in undifferentiated neural progenitors and in astrocyte lineage, particularly in Bergmann glia, a subtype of radial glia, and a few discrete neuronal populations residing in the superior colliculus, the ocular motor nucleus, the raphe and pontine nuclei, and in various thalamic nuclei. Weakly expressed in heart, kidney, skeletal muscle, spleen, testis, gut and lung.

Its subcellular location is the secreted. In terms of biological role, involved in both glial cell differentiation and axonal network formation during neurogenesis. Promotes astrocyte differentiation and transforms cerebellar astrocytes into radial glia. Also induces axonal extension in small and intermediate neurons of sensory ganglia by activating nearby satellite glia. The chain is Meteorin (Metrn) from Mus musculus (Mouse).